The sequence spans 259 residues: Ribonuclease PH (259 aa).

Phosphate-binding positions include arginine 88 and 126–128 (GTR).

It belongs to the RNase PH family. As to quaternary structure, homohexameric ring arranged as a trimer of dimers.

It catalyses the reaction tRNA(n+1) + phosphate = tRNA(n) + a ribonucleoside 5'-diphosphate. In terms of biological role, phosphorolytic 3'-5' exoribonuclease that plays an important role in tRNA 3'-end maturation. Removes nucleotide residues following the 3'-CCA terminus of tRNAs; can also add nucleotides to the ends of RNA molecules by using nucleoside diphosphates as substrates, but this may not be physiologically important. Probably plays a role in initiation of 16S rRNA degradation (leading to ribosome degradation) during starvation. The chain is Ribonuclease PH from Mycobacterium bovis (strain BCG / Pasteur 1173P2).